Reading from the N-terminus, the 339-residue chain is GTP 3',8-cyclase (339 aa).

The Radical SAM core domain occupies 20-241 (NFDRKFEYLR…WTQKQSLSHD (222 aa)). GTP is bound at residue R29. Residues C36 and C40 each coordinate [4Fe-4S] cluster. Position 42 (Y42) interacts with S-adenosyl-L-methionine. A [4Fe-4S] cluster-binding site is contributed by C43. R78 lines the GTP pocket. An S-adenosyl-L-methionine-binding site is contributed by G82. T109 lines the GTP pocket. S133 is a binding site for S-adenosyl-L-methionine. K170 provides a ligand contact to GTP. M204 lines the S-adenosyl-L-methionine pocket. [4Fe-4S] cluster is bound by residues C267 and C270. 272–274 (RLR) is a GTP binding site. Residue C284 participates in [4Fe-4S] cluster binding.

Belongs to the radical SAM superfamily. MoaA family. As to quaternary structure, monomer and homodimer. [4Fe-4S] cluster is required as a cofactor.

It catalyses the reaction GTP + AH2 + S-adenosyl-L-methionine = (8S)-3',8-cyclo-7,8-dihydroguanosine 5'-triphosphate + 5'-deoxyadenosine + L-methionine + A + H(+). Its pathway is cofactor biosynthesis; molybdopterin biosynthesis. Its function is as follows. Catalyzes the cyclization of GTP to (8S)-3',8-cyclo-7,8-dihydroguanosine 5'-triphosphate. The protein is GTP 3',8-cyclase of Psychromonas ingrahamii (strain DSM 17664 / CCUG 51855 / 37).